We begin with the raw amino-acid sequence, 181 residues long: ATP-dependent protease subunit HslV (181 aa).

Threonine 7 is a catalytic residue. Na(+) is bound by residues glycine 166, cysteine 169, and threonine 172.

This sequence belongs to the peptidase T1B family. HslV subfamily. As to quaternary structure, a double ring-shaped homohexamer of HslV is capped on each side by a ring-shaped HslU homohexamer. The assembly of the HslU/HslV complex is dependent on binding of ATP.

The protein resides in the cytoplasm. The enzyme catalyses ATP-dependent cleavage of peptide bonds with broad specificity.. Allosterically activated by HslU binding. In terms of biological role, protease subunit of a proteasome-like degradation complex believed to be a general protein degrading machinery. The polypeptide is ATP-dependent protease subunit HslV (Delftia acidovorans (strain DSM 14801 / SPH-1)).